The chain runs to 298 residues: Pyridoxal kinase PdxY (298 aa).

A substrate-binding site is contributed by Ser17. Positions 119 and 156 each coordinate ATP. Asp234 is a substrate binding site.

The protein belongs to the pyridoxine kinase family. PdxY subfamily. As to quaternary structure, homodimer. Mg(2+) is required as a cofactor.

The catalysed reaction is pyridoxal + ATP = pyridoxal 5'-phosphate + ADP + H(+). The protein operates within cofactor metabolism; pyridoxal 5'-phosphate salvage; pyridoxal 5'-phosphate from pyridoxal: step 1/1. Functionally, pyridoxal kinase involved in the salvage pathway of pyridoxal 5'-phosphate (PLP). Catalyzes the phosphorylation of pyridoxal to PLP. The polypeptide is Pyridoxal kinase PdxY (Deinococcus radiodurans (strain ATCC 13939 / DSM 20539 / JCM 16871 / CCUG 27074 / LMG 4051 / NBRC 15346 / NCIMB 9279 / VKM B-1422 / R1)).